Here is a 908-residue protein sequence, read N- to C-terminus: Disease resistance protein RPP8 (908 aa).

The stretch at 15–57 (DLLSRESERLQGIDGQLDGLKRQLRSLQSLLKDADAKKHGSDR) forms a coiled coil. In terms of domain architecture, NB-ARC spans 146–459 (RQRVQREIRQ…AEGIYDGSTI (314 aa)). 192-199 (GMGGIGKT) is an ATP binding site. 9 LRR repeats span residues 575-600 (LTLLRVLDLSWVKFEGGKLPCSIGGL), 601-623 (IHLRYLSLYEAKVSHLPSTMRNL), 648-673 (MIQLRYLSLPLKMDDKTKLELGDLVN), 693-718 (MTKLRYLAVSLSERCNFETLSSSLRE), 722-746 (LETLNFLFSLETYMVDYMGEFVLDH), 748-770 (IHLKQLGLAVRMSKIPDQHQFPP), 793-820 (LLHLKSVRLARKAFLGSRMVCSKGGFPQ), 842-867 (MPCLRTLTIDDCKKLKELPDGLKYIT), and 882-905 (KEKLVPGGEDYYKVQHIPDVQFIN).

This sequence belongs to the disease resistance NB-LRR family. RPP8/HRT subfamily. Interacts with the NAC protein TIP. Interacts with MORC1/CRT1. Interacts with COP1 and is subsequently degraded in a 26s proteasome dependent manner. Mostly expressed in leaves, and, to a lower extent, in roots.

It localises to the cell membrane. Its function is as follows. Disease resistance protein. Resistance proteins guard the plant against pathogens that contain an appropriate avirulence protein via an indirect interaction with this avirulence protein. That triggers a defense system including the hypersensitive response, which restricts the pathogen growth. The interaction with TIP (TCV-interacting protein) may be essential for the recognition of the avirulence proteins, and the triggering of the defense response. Triggers resistance to turnip crinkle virus (TCV) via a SAG101-dependent pathway. The chain is Disease resistance protein RPP8 (RPP8) from Arabidopsis thaliana (Mouse-ear cress).